Here is a 105-residue protein sequence, read N- to C-terminus: Large ribosomal subunit protein uL24 (105 aa).

The protein belongs to the universal ribosomal protein uL24 family. In terms of assembly, part of the 50S ribosomal subunit.

One of two assembly initiator proteins, it binds directly to the 5'-end of the 23S rRNA, where it nucleates assembly of the 50S subunit. In terms of biological role, one of the proteins that surrounds the polypeptide exit tunnel on the outside of the subunit. The protein is Large ribosomal subunit protein uL24 of Psychrobacter cryohalolentis (strain ATCC BAA-1226 / DSM 17306 / VKM B-2378 / K5).